Reading from the N-terminus, the 528-residue chain is Bifunctional purine biosynthesis protein PurH (528 aa).

Residues 2 to 149 form the MGS-like domain; that stretch reads TDLAPLRRAL…KNHGFVSVVV (148 aa).

Belongs to the PurH family.

It catalyses the reaction (6R)-10-formyltetrahydrofolate + 5-amino-1-(5-phospho-beta-D-ribosyl)imidazole-4-carboxamide = 5-formamido-1-(5-phospho-D-ribosyl)imidazole-4-carboxamide + (6S)-5,6,7,8-tetrahydrofolate. It carries out the reaction IMP + H2O = 5-formamido-1-(5-phospho-D-ribosyl)imidazole-4-carboxamide. The protein operates within purine metabolism; IMP biosynthesis via de novo pathway; 5-formamido-1-(5-phospho-D-ribosyl)imidazole-4-carboxamide from 5-amino-1-(5-phospho-D-ribosyl)imidazole-4-carboxamide (10-formyl THF route): step 1/1. It functions in the pathway purine metabolism; IMP biosynthesis via de novo pathway; IMP from 5-formamido-1-(5-phospho-D-ribosyl)imidazole-4-carboxamide: step 1/1. The polypeptide is Bifunctional purine biosynthesis protein PurH (Roseobacter denitrificans (strain ATCC 33942 / OCh 114) (Erythrobacter sp. (strain OCh 114))).